The chain runs to 185 residues: dCTP deaminase (185 aa).

DCTP is bound by residues 108–113 (KSTYAR), 132–134 (TLE), glutamine 153, tyrosine 167, and glutamine 177. The Proton donor/acceptor role is filled by glutamate 134.

It belongs to the dCTP deaminase family. As to quaternary structure, homotrimer.

The enzyme catalyses dCTP + H2O + H(+) = dUTP + NH4(+). It functions in the pathway pyrimidine metabolism; dUMP biosynthesis; dUMP from dCTP (dUTP route): step 1/2. In terms of biological role, catalyzes the deamination of dCTP to dUTP. The chain is dCTP deaminase from Pelagibacter ubique (strain HTCC1062).